The chain runs to 355 residues: Agamous-like MADS-box protein AGL81 (355 aa).

The segment at 1 to 22 is disordered; that stretch reads MAIRSLPSSSRCSSSSSSSSYS. Residues 26–68 form the MADS-box domain; the sequence is TSLSNRLETIFKKASELCTLCDIEACVIYYGPDGELKTWPPER. Basic and acidic residues predominate over residues 162–174; sequence VESQKHKETKPDH. The interval 162 to 186 is disordered; it reads VESQKHKETKPDHQSLASSSLNHQT. Polar residues predominate over residues 176–186; that stretch reads SLASSSLNHQT.

In terms of assembly, interacts with MEE14/CBP1.

Its subcellular location is the nucleus. Functionally, probable transcription factor that may function in the maintenance of the proper function of the central cell in pollen tube attraction. This Arabidopsis thaliana (Mouse-ear cress) protein is Agamous-like MADS-box protein AGL81.